The primary structure comprises 286 residues: Pantothenate synthetase (286 aa).

30–37 (MGALHEGH) lines the ATP pocket. Catalysis depends on His-37, which acts as the Proton donor. Position 61 (Gln-61) interacts with (R)-pantoate. Gln-61 serves as a coordination point for beta-alanine. Residue 147-150 (GEKD) participates in ATP binding. Residue Gln-153 coordinates (R)-pantoate. ATP-binding positions include Val-180 and 188–191 (LSSR).

The protein belongs to the pantothenate synthetase family. As to quaternary structure, homodimer.

Its subcellular location is the cytoplasm. It catalyses the reaction (R)-pantoate + beta-alanine + ATP = (R)-pantothenate + AMP + diphosphate + H(+). It functions in the pathway cofactor biosynthesis; (R)-pantothenate biosynthesis; (R)-pantothenate from (R)-pantoate and beta-alanine: step 1/1. Functionally, catalyzes the condensation of pantoate with beta-alanine in an ATP-dependent reaction via a pantoyl-adenylate intermediate. This Novosphingobium aromaticivorans (strain ATCC 700278 / DSM 12444 / CCUG 56034 / CIP 105152 / NBRC 16084 / F199) protein is Pantothenate synthetase.